Consider the following 1225-residue polypeptide: DNA-directed RNA polymerase subunit beta' (1225 aa).

4 residues coordinate Zn(2+): C60, C62, C75, and C78. Residues D450, D452, and D454 each contribute to the Mg(2+) site. C818, C892, C899, and C902 together coordinate Zn(2+).

The protein belongs to the RNA polymerase beta' chain family. In terms of assembly, the RNAP catalytic core consists of 2 alpha, 1 beta, 1 beta' and 1 omega subunit. When a sigma factor is associated with the core the holoenzyme is formed, which can initiate transcription. The cofactor is Mg(2+). Requires Zn(2+) as cofactor.

The enzyme catalyses RNA(n) + a ribonucleoside 5'-triphosphate = RNA(n+1) + diphosphate. Functionally, DNA-dependent RNA polymerase catalyzes the transcription of DNA into RNA using the four ribonucleoside triphosphates as substrates. In Streptococcus pneumoniae (strain Hungary19A-6), this protein is DNA-directed RNA polymerase subunit beta'.